Reading from the N-terminus, the 618-residue chain is Dihydroxy-acid dehydratase (618 aa).

Residue Asp81 coordinates Mg(2+). Cys122 provides a ligand contact to [2Fe-2S] cluster. The Mg(2+) site is built by Asp123 and Lys124. N6-carboxylysine is present on Lys124. Residue Cys195 coordinates [2Fe-2S] cluster. Glu492 provides a ligand contact to Mg(2+). Ser518 (proton acceptor) is an active-site residue.

This sequence belongs to the IlvD/Edd family. In terms of assembly, homodimer. [2Fe-2S] cluster is required as a cofactor. It depends on Mg(2+) as a cofactor.

The enzyme catalyses (2R)-2,3-dihydroxy-3-methylbutanoate = 3-methyl-2-oxobutanoate + H2O. The catalysed reaction is (2R,3R)-2,3-dihydroxy-3-methylpentanoate = (S)-3-methyl-2-oxopentanoate + H2O. It participates in amino-acid biosynthesis; L-isoleucine biosynthesis; L-isoleucine from 2-oxobutanoate: step 3/4. The protein operates within amino-acid biosynthesis; L-valine biosynthesis; L-valine from pyruvate: step 3/4. In terms of biological role, functions in the biosynthesis of branched-chain amino acids. Catalyzes the dehydration of (2R,3R)-2,3-dihydroxy-3-methylpentanoate (2,3-dihydroxy-3-methylvalerate) into 2-oxo-3-methylpentanoate (2-oxo-3-methylvalerate) and of (2R)-2,3-dihydroxy-3-methylbutanoate (2,3-dihydroxyisovalerate) into 2-oxo-3-methylbutanoate (2-oxoisovalerate), the penultimate precursor to L-isoleucine and L-valine, respectively. The chain is Dihydroxy-acid dehydratase from Zymomonas mobilis subsp. mobilis (strain ATCC 31821 / ZM4 / CP4).